Reading from the N-terminus, the 306-residue chain is F-box/LRR-repeat protein At3g26922 (306 aa).

The region spanning 13 to 73 (EDRISDLPEA…QSEDETYSEI (61 aa)) is the F-box domain. LRR repeat units follow at residues 67–93 (DETY…HLGF), 98–122 (CRSV…VLHV), 138–170 (CETL…RLEN), 171–196 (VDYK…VVYR), 215–243 (LTIY…KIDG), and 263–288 (IMNV…SLAL).

In Arabidopsis thaliana (Mouse-ear cress), this protein is F-box/LRR-repeat protein At3g26922.